Here is a 941-residue protein sequence, read N- to C-terminus: Protein BREAST CANCER SUSCEPTIBILITY 1 homolog (941 aa).

An RING-type zinc finger spans residues 16-54 (CPICLSLYNSAVSLSCNHVFCNACIVKSMKMDATCPVCK). 2 disordered regions span residues 87–282 (FVSQ…ILPS) and 303–528 (KVKV…GKDD). Composition is skewed to basic and acidic residues over residues 96–115 (SDKE…DKNR) and 125–136 (KRNEYGKTKEID). Positions 157-173 (LLQNLSAESLTKPTESV) are enriched in polar residues. Basic and acidic residues predominate over residues 175 to 196 (TAEKPKDYTENTVIRLDEHPSL). A compositionally biased stretch (polar residues) spans 216–236 (NSSQRTESDQLLGTTPVNVPS). A compositionally biased stretch (basic and acidic residues) spans 242 to 255 (DSDHESPSKEDEQQ). Positions 298-305 (QKKLPKVK) match the Nuclear localization signal 1 motif. 2 stretches are compositionally biased toward polar residues: residues 329–357 (GVSQ…SGTI) and 376–391 (SKAQ…NVSN). 2 stretches are compositionally biased toward basic and acidic residues: residues 428-453 (GKGD…EKPS) and 477-487 (KTSEKKLKLDS). A Nuclear localization signal 2 motif is present at residues 444-451 (EKRSPTEK). Residues 489 to 498 (MISSKATQPH) are compositionally biased toward polar residues. The span at 512 to 528 (DKQDSRNNRKSTVGKDD) shows a compositional bias: basic and acidic residues. Residues 561–612 (KFTCAFCQCSEDTEASGEMTHYYRGEPVSADFNGGSKVIHVHKNCAEWAPNV) form a C2HC pre-PHD-type zinc finger. The PHD-type; degenerate zinc finger occupies 632-681 (ISCSCCGLKGAALGCYNKSCKNSFHVTCAKLIPECRWDNVKFVMLCPLDA). BRCT domains lie at 724–819 (KQFH…PYEI) and 840–941 (KKPK…LVLI).

Forms heterodimer with BARD1/ROW1. In terms of tissue distribution, expressed ubiquitously with highest levels in flower buds. Mostly expressed in flowers and siliques, and, to a lower extent, in roots, rosette leaves, inflorescence and young cauline leaves.

It is found in the nucleus. Plays a role in DNA repair and in cell-cycle control. Required for the repair of DNA double-strand breaks (DSBs), both natural and induced by genotoxic stress, by homologous recombination (HR). The sequence is that of Protein BREAST CANCER SUSCEPTIBILITY 1 homolog from Arabidopsis thaliana (Mouse-ear cress).